Reading from the N-terminus, the 259-residue chain is uncharacterized protein (259 aa).

This sequence belongs to the methyltransferase superfamily.

This is an uncharacterized protein from Mycobacteroides abscessus (strain ATCC 19977 / DSM 44196 / CCUG 20993 / CIP 104536 / JCM 13569 / NCTC 13031 / TMC 1543 / L948) (Mycobacterium abscessus).